Reading from the N-terminus, the 258-residue chain is Regulatory protein RecX (258 aa).

Belongs to the RecX family.

It is found in the cytoplasm. In terms of biological role, modulates RecA activity. The sequence is that of Regulatory protein RecX from Streptococcus pneumoniae (strain Hungary19A-6).